The chain runs to 366 residues: Ribosome-binding ATPase YchF (366 aa).

The OBG-type G domain maps to 3-259 (LTAGIVGLPN…LEGEEKQMFL (257 aa)). 12–17 (NVGKST) contacts ATP. Mg(2+) contacts are provided by Ser16 and Thr36. A TGS domain is found at 281-364 (GLATYFTAGE…QDGDVIHFRF (84 aa)).

The protein belongs to the TRAFAC class OBG-HflX-like GTPase superfamily. OBG GTPase family. YchF/OLA1 subfamily. Requires Mg(2+) as cofactor.

Its function is as follows. ATPase that binds to both the 70S ribosome and the 50S ribosomal subunit in a nucleotide-independent manner. The sequence is that of Ribosome-binding ATPase YchF from Bacillus subtilis (strain 168).